The chain runs to 309 residues: ATP synthase gamma chain (309 aa).

Belongs to the ATPase gamma chain family. In terms of assembly, F-type ATPases have 2 components, CF(1) - the catalytic core - and CF(0) - the membrane proton channel. CF(1) has five subunits: alpha(3), beta(3), gamma(1), delta(1), epsilon(1). CF(0) has three main subunits: a, b and c.

The protein resides in the cell membrane. Its function is as follows. Produces ATP from ADP in the presence of a proton gradient across the membrane. The gamma chain is believed to be important in regulating ATPase activity and the flow of protons through the CF(0) complex. This chain is ATP synthase gamma chain, found in Mycolicibacterium gilvum (strain PYR-GCK) (Mycobacterium gilvum (strain PYR-GCK)).